The following is a 465-amino-acid chain: Ribosomal protein uS12 methylthiotransferase RimO (465 aa).

Positions 1 to 117 constitute an MTTase N-terminal domain; it reads MKVGFISLGC…IVDICEGMPP (117 aa). Residues Cys10, Cys46, Cys80, Cys150, Cys154, and Cys157 each contribute to the [4Fe-4S] cluster site. The Radical SAM core domain maps to 136–369; sequence ATPRHFAYMK…AIQRKIARAR (234 aa). Residues 371 to 442 form the TRAM domain; sequence RGLVGKEVPV…DYDVVGTLLA (72 aa).

It belongs to the methylthiotransferase family. RimO subfamily. [4Fe-4S] cluster is required as a cofactor.

The protein resides in the cytoplasm. The catalysed reaction is L-aspartate(89)-[ribosomal protein uS12]-hydrogen + (sulfur carrier)-SH + AH2 + 2 S-adenosyl-L-methionine = 3-methylsulfanyl-L-aspartate(89)-[ribosomal protein uS12]-hydrogen + (sulfur carrier)-H + 5'-deoxyadenosine + L-methionine + A + S-adenosyl-L-homocysteine + 2 H(+). Its function is as follows. Catalyzes the methylthiolation of an aspartic acid residue of ribosomal protein uS12. The sequence is that of Ribosomal protein uS12 methylthiotransferase RimO from Solibacter usitatus (strain Ellin6076).